Consider the following 423-residue polypeptide: Zinc transporter ZIP13 (423 aa).

At 1–15 the chain is on the lumenal side; the sequence is MPGCPCPGIGMAGQR. A helical transmembrane segment spans residues 16–36; that stretch reads LLFLAALALELLGGAGGSQQA. Topologically, residues 37–68 are cytoplasmic; it reads LRSRGVAAACRLDSKESESWGALLSGERLETW. A helical membrane pass occupies residues 69–89; it reads ICSLLGSLMVGLSGVFPLLVI. The Lumenal portion of the chain corresponds to 90 to 108; sequence PLEMGTTLRSEAGARRLKQ. The helical transmembrane segment at 109–129 threads the bilayer; it reads LLSFALGGLLGNVFLHLLPEA. At 130–149 the chain is on the cytoplasmic side; sequence WAYTNSASSGGERQSLQQQQ. Residues 150–170 form a helical membrane-spanning segment; it reads QLGLWVIAGFLTFLVLEKLFF. Topologically, residues 171 to 235 are lumenal; it reads DSKGKEETSQ…TIDNFTHGLA (65 aa). Residues 236–256 form a helical membrane-spanning segment; that stretch reads VAASFLVSKKIGLLTTMAILL. The XEXPHE-motif signature appears at 257-262; the sequence is HEIPHE. At 257-278 the chain is on the cytoplasmic side; the sequence is HEIPHEVGDFAILLRAGFDRWS. The helical transmembrane segment at 279-299 threads the bilayer; sequence AAKLQLSTALGGLLGACFAIC. The Lumenal portion of the chain corresponds to 300 to 368; sequence AQSPKGVGTG…RAPPPATEET (69 aa). A helical transmembrane segment spans residues 369-389; sequence VAWILPFTSGGFLYIALVNVL. The Cytoplasmic portion of the chain corresponds to 390–401; the sequence is PDLLEEDDPWRS. The chain crosses the membrane as a helical span at residues 402–422; the sequence is LQQVLLLCAGIVVMVLFSVFV. E423 is a topological domain (lumenal).

This sequence belongs to the ZIP transporter (TC 2.A.5) family. As to quaternary structure, homodimer.

It localises to the golgi apparatus membrane. Its subcellular location is the cytoplasmic vesicle membrane. The protein resides in the endoplasmic reticulum membrane. It catalyses the reaction Zn(2+)(in) = Zn(2+)(out). Its function is as follows. Functions as a zinc transporter transporting Zn(2+) from the Golgi apparatus to the cytosol and thus influences the zinc level at least in areas of the cytosol. May regulate beige adipocyte differentiation. The polypeptide is Zinc transporter ZIP13 (Bos taurus (Bovine)).